We begin with the raw amino-acid sequence, 135 residues long: Large ribosomal subunit protein uL16c (135 aa).

It belongs to the universal ribosomal protein uL16 family. In terms of assembly, part of the 50S ribosomal subunit.

It localises to the plastid. It is found in the chloroplast. The sequence is that of Large ribosomal subunit protein uL16c from Gossypium hirsutum (Upland cotton).